A 316-amino-acid chain; its full sequence is Acetyl-coenzyme A carboxylase carboxyl transferase subunit alpha (316 aa).

Residues 40-290 form the CoA carboxyltransferase C-terminal domain; it reads KARKELQRIY…RERFAHHLQE (251 aa).

The protein belongs to the AccA family. In terms of assembly, acetyl-CoA carboxylase is a heterohexamer composed of biotin carboxyl carrier protein (AccB), biotin carboxylase (AccC) and two subunits each of ACCase subunit alpha (AccA) and ACCase subunit beta (AccD).

Its subcellular location is the cytoplasm. It carries out the reaction N(6)-carboxybiotinyl-L-lysyl-[protein] + acetyl-CoA = N(6)-biotinyl-L-lysyl-[protein] + malonyl-CoA. Its pathway is lipid metabolism; malonyl-CoA biosynthesis; malonyl-CoA from acetyl-CoA: step 1/1. Component of the acetyl coenzyme A carboxylase (ACC) complex. First, biotin carboxylase catalyzes the carboxylation of biotin on its carrier protein (BCCP) and then the CO(2) group is transferred by the carboxyltransferase to acetyl-CoA to form malonyl-CoA. This chain is Acetyl-coenzyme A carboxylase carboxyl transferase subunit alpha, found in Acidithiobacillus ferrooxidans (strain ATCC 23270 / DSM 14882 / CIP 104768 / NCIMB 8455) (Ferrobacillus ferrooxidans (strain ATCC 23270)).